The sequence spans 207 residues: Superoxide dismutase [Mn] (207 aa).

Mn(2+)-binding residues include His28, His76, Asp160, and His164.

The protein belongs to the iron/manganese superoxide dismutase family. The cofactor is Mn(2+).

It catalyses the reaction 2 superoxide + 2 H(+) = H2O2 + O2. Its function is as follows. Destroys superoxide anion radicals which are normally produced within the cells and which are toxic to biological systems. This chain is Superoxide dismutase [Mn] (sodA), found in Nocardia asteroides.